A 228-amino-acid polypeptide reads, in one-letter code: 3-dehydroquinate dehydratase (228 aa).

3-dehydroquinate is bound by residues 30–32 (EWR) and R62. The active-site Proton donor/acceptor is the H118. K143 acts as the Schiff-base intermediate with substrate in catalysis. R186, S205, and Q209 together coordinate 3-dehydroquinate.

Belongs to the type-I 3-dehydroquinase family. Homodimer.

The catalysed reaction is 3-dehydroquinate = 3-dehydroshikimate + H2O. The protein operates within metabolic intermediate biosynthesis; chorismate biosynthesis; chorismate from D-erythrose 4-phosphate and phosphoenolpyruvate: step 3/7. Involved in the third step of the chorismate pathway, which leads to the biosynthesis of aromatic amino acids. Catalyzes the cis-dehydration of 3-dehydroquinate (DHQ) and introduces the first double bond of the aromatic ring to yield 3-dehydroshikimate. The chain is 3-dehydroquinate dehydratase from Streptococcus pyogenes serotype M12 (strain MGAS9429).